The primary structure comprises 273 residues: Formamidopyrimidine-DNA glycosylase (273 aa).

P2 functions as the Schiff-base intermediate with DNA in the catalytic mechanism. The active-site Proton donor is E3. K58 serves as the catalytic Proton donor; for beta-elimination activity. DNA-binding residues include H91 and R110. The segment at 238 to 272 adopts an FPG-type zinc-finger fold; the sequence is QVYGKTGQPCPRCGCLIKKIKVGGRGTHYCPRCQC. R262 functions as the Proton donor; for delta-elimination activity in the catalytic mechanism.

The protein belongs to the FPG family. Monomer. Zn(2+) serves as cofactor.

It catalyses the reaction Hydrolysis of DNA containing ring-opened 7-methylguanine residues, releasing 2,6-diamino-4-hydroxy-5-(N-methyl)formamidopyrimidine.. It carries out the reaction 2'-deoxyribonucleotide-(2'-deoxyribose 5'-phosphate)-2'-deoxyribonucleotide-DNA = a 3'-end 2'-deoxyribonucleotide-(2,3-dehydro-2,3-deoxyribose 5'-phosphate)-DNA + a 5'-end 5'-phospho-2'-deoxyribonucleoside-DNA + H(+). Functionally, involved in base excision repair of DNA damaged by oxidation or by mutagenic agents. Acts as a DNA glycosylase that recognizes and removes damaged bases. Has a preference for oxidized purines, such as 7,8-dihydro-8-oxoguanine (8-oxoG). Has AP (apurinic/apyrimidinic) lyase activity and introduces nicks in the DNA strand. Cleaves the DNA backbone by beta-delta elimination to generate a single-strand break at the site of the removed base with both 3'- and 5'-phosphates. This is Formamidopyrimidine-DNA glycosylase from Streptococcus agalactiae serotype Ia (strain ATCC 27591 / A909 / CDC SS700).